Reading from the N-terminus, the 180-residue chain is Large ribosomal subunit protein uL6 (180 aa).

The protein belongs to the universal ribosomal protein uL6 family. Part of the 50S ribosomal subunit.

Its function is as follows. This protein binds to the 23S rRNA, and is important in its secondary structure. It is located near the subunit interface in the base of the L7/L12 stalk, and near the tRNA binding site of the peptidyltransferase center. In Cutibacterium acnes (strain DSM 16379 / KPA171202) (Propionibacterium acnes), this protein is Large ribosomal subunit protein uL6.